A 445-amino-acid polypeptide reads, in one-letter code: Argininosuccinate synthase (445 aa).

ATP contacts are provided by residues 17 to 25 (AFSGGLDTS) and Ala-43. Tyr-99 contributes to the L-citrulline binding site. 2 residues coordinate ATP: Gly-129 and Thr-131. The L-aspartate site is built by Thr-131, Asn-135, and Asp-136. Residue Asn-135 coordinates L-citrulline. ATP is bound at residue Asp-136. Arg-139 and Ser-192 together coordinate L-citrulline. Asp-194 is an ATP binding site. Residues Thr-201, Glu-203, and Glu-280 each coordinate L-citrulline.

The protein belongs to the argininosuccinate synthase family. Type 2 subfamily. In terms of assembly, homotetramer.

Its subcellular location is the cytoplasm. It catalyses the reaction L-citrulline + L-aspartate + ATP = 2-(N(omega)-L-arginino)succinate + AMP + diphosphate + H(+). The protein operates within amino-acid biosynthesis; L-arginine biosynthesis; L-arginine from L-ornithine and carbamoyl phosphate: step 2/3. The protein is Argininosuccinate synthase of Burkholderia ambifaria (strain ATCC BAA-244 / DSM 16087 / CCUG 44356 / LMG 19182 / AMMD) (Burkholderia cepacia (strain AMMD)).